The following is a 262-amino-acid chain: 3-methyl-2-oxobutanoate hydroxymethyltransferase (262 aa).

Mg(2+) contacts are provided by Asp42 and Asp81. Residues 42–43, Asp81, and Lys110 each bind 3-methyl-2-oxobutanoate; that span reads DS. Glu112 is a Mg(2+) binding site. Glu180 (proton acceptor) is an active-site residue.

It belongs to the PanB family. Homodecamer; pentamer of dimers. Requires Mg(2+) as cofactor.

It is found in the cytoplasm. It carries out the reaction 3-methyl-2-oxobutanoate + (6R)-5,10-methylene-5,6,7,8-tetrahydrofolate + H2O = 2-dehydropantoate + (6S)-5,6,7,8-tetrahydrofolate. The protein operates within cofactor biosynthesis; (R)-pantothenate biosynthesis; (R)-pantoate from 3-methyl-2-oxobutanoate: step 1/2. Catalyzes the reversible reaction in which hydroxymethyl group from 5,10-methylenetetrahydrofolate is transferred onto alpha-ketoisovalerate to form ketopantoate. The sequence is that of 3-methyl-2-oxobutanoate hydroxymethyltransferase from Legionella pneumophila subsp. pneumophila (strain Philadelphia 1 / ATCC 33152 / DSM 7513).